A 530-amino-acid polypeptide reads, in one-letter code: Calnexin homolog 1 (530 aa).

An N-terminal signal peptide occupies residues 1–20; it reads MRQRQLFSVFLLLLAFVSFQ. At 21 to 466 the chain is on the lumenal side; it reads KLCYCDDQTV…EKAEQQPNLT (446 aa). Serine 34 and aspartate 65 together coordinate Ca(2+). The cysteines at positions 108 and 143 are disulfide-linked. Tyrosine 112, lysine 114, tyrosine 134, and aspartate 141 together coordinate an alpha-D-glucoside. Residues 216-315 form a disordered region; it reads ALIPAKTIPD…KCEAAPGCGE (100 aa). Residues 223 to 356 are p domain (Extended arm); the sequence is IPDPEDKKPE…RDIPNPDYFE (134 aa). Residues 224-240 show a composition bias toward basic and acidic residues; the sequence is PDPEDKKPEDWDERAKI. Repeat copies occupy residues 225–236, 242–253, 261–272, 280–291, and 295–305. 4 X approximate repeats regions lie at residues 225–291 and 295–352; these read DPED…DWDD and GMWE…IPNP. Over residues 250–281 the composition is skewed to acidic residues; that stretch reads DWDEDAPMEIEDEEAEKPEGWLDDEPEEVDDP. Cysteines 307 and 313 form a disulfide. 3 consecutive repeat copies span residues 314 to 324, 328 to 338, and 342 to 352. An an alpha-D-glucoside-binding site is contributed by glutamate 371. Aspartate 382 lines the Ca(2+) pocket. Asparagine 464 carries an N-linked (GlcNAc...) asparagine glycan. The helical transmembrane segment at 467–487 threads the bilayer; the sequence is IGVLVAIVVVFFSLFLKLIFG. Residues 488–530 are Cytoplasmic-facing; the sequence is GKKAAAPVEKKKPEVAESSKSGDEAEKKEETAAPRKRQPRRDN. Residues 490 to 530 are disordered; that stretch reads KAAAPVEKKKPEVAESSKSGDEAEKKEETAAPRKRQPRRDN. A compositionally biased stretch (basic and acidic residues) spans 495-520; that stretch reads VEKKKPEVAESSKSGDEAEKKEETAA. The residue at position 508 (serine 508) is a Phosphoserine. The segment covering 521 to 530 has biased composition (basic residues); it reads PRKRQPRRDN.

This sequence belongs to the calreticulin family.

The protein resides in the endoplasmic reticulum membrane. Functionally, calcium-binding protein that interacts with newly synthesized monoglucosylated glycoproteins in the endoplasmic reticulum. It may act in assisting protein assembly and/or in the retention within the ER of unassembled protein subunits. It seems to play a major role in the quality control apparatus of the ER by the retention of incorrectly folded proteins. In Arabidopsis thaliana (Mouse-ear cress), this protein is Calnexin homolog 1 (CNX1).